Here is a 360-residue protein sequence, read N- to C-terminus: tRNA pseudouridine synthase D (360 aa).

Asp-76 serves as the catalytic Nucleophile. One can recognise a TRUD domain in the interval 151–332 (GMPNFFGYQR…HGIYKEKNAW (182 aa)).

This sequence belongs to the pseudouridine synthase TruD family.

It catalyses the reaction uridine(13) in tRNA = pseudouridine(13) in tRNA. Functionally, responsible for synthesis of pseudouridine from uracil-13 in transfer RNAs. This chain is tRNA pseudouridine synthase D, found in Nitratiruptor sp. (strain SB155-2).